Here is a 217-residue protein sequence, read N- to C-terminus: Probable GTP-binding protein EngB (217 aa).

The 185-residue stretch at 29–213 (GPSEVAFAGR…RQAIAQTVGI (185 aa)) folds into the EngB-type G domain. GTP is bound by residues 37–44 (GRSNVGKS), 64–68 (GRTQE), 91–94 (DMPG), 158–161 (TKTD), and 192–194 (TSS). The Mg(2+) site is built by serine 44 and threonine 66.

Belongs to the TRAFAC class TrmE-Era-EngA-EngB-Septin-like GTPase superfamily. EngB GTPase family. Requires Mg(2+) as cofactor.

In terms of biological role, necessary for normal cell division and for the maintenance of normal septation. In Rhizobium etli (strain CIAT 652), this protein is Probable GTP-binding protein EngB.